A 400-amino-acid chain; its full sequence is Na(+)/H(+) antiporter NhaA 1 (400 aa).

Helical transmembrane passes span 25 to 45, 67 to 87, 103 to 123, 130 to 150, 159 to 179, 184 to 204, 213 to 233, 264 to 284, 303 to 323, 339 to 359, and 372 to 392; these read IVLMFCAIIAIIIANSNFSSM, ILHWINDGLMAIFFLVVGMEI, ILPVSAAIGGMVVPAIIYALF, IIGWGIPMATDIAFALGILSL, IIIFLTALAIVDDLGAIIVIA, SEISWIALILGLIIFLAIILA, WLYIIFGIALWICFLKSGVHE, VLTPLSSFIIMPIFALANSGI, IIFGLFIGKQIGIFGASYILV, LYGASVLGGIGFTMSLFVSSL, and ISIIIASILSAAFGAAIFKII.

Belongs to the NhaA Na(+)/H(+) (TC 2.A.33) antiporter family.

It localises to the cell membrane. The catalysed reaction is Na(+)(in) + 2 H(+)(out) = Na(+)(out) + 2 H(+)(in). In terms of biological role, na(+)/H(+) antiporter that extrudes sodium in exchange for external protons. In Clostridium beijerinckii (strain ATCC 51743 / NCIMB 8052) (Clostridium acetobutylicum), this protein is Na(+)/H(+) antiporter NhaA 1.